A 205-amino-acid chain; its full sequence is MIGKLKGLIDSYGEDYVILDVQGVGYQVHCASRTLQALPQAGEAAVLSIETYVREDQIKLFGFRSDLEREWFRLLQTVQGVGAKVALSVLSTLPPSDLADAIALRDKAAVARTPGVGPKVAERIVTELKDKAPGFASVDPAVAHLSGAIEERSAPRPVADAISALVNLGYGQPQAAAAIAAAARSAGDAAQTAQLIKLGLKELSK.

The domain I stretch occupies residues 1 to 64 (MIGKLKGLID…EDQIKLFGFR (64 aa)). Residues 65-143 (SDLEREWFRL…GFASVDPAVA (79 aa)) form a domain II region. The tract at residues 144–153 (HLSGAIEERS) is flexible linker. A domain III region spans residues 153-205 (SAPRPVADAISALVNLGYGQPQAAAAIAAAARSAGDAAQTAQLIKLGLKELSK).

Belongs to the RuvA family. Homotetramer. Forms an RuvA(8)-RuvB(12)-Holliday junction (HJ) complex. HJ DNA is sandwiched between 2 RuvA tetramers; dsDNA enters through RuvA and exits via RuvB. An RuvB hexamer assembles on each DNA strand where it exits the tetramer. Each RuvB hexamer is contacted by two RuvA subunits (via domain III) on 2 adjacent RuvB subunits; this complex drives branch migration. In the full resolvosome a probable DNA-RuvA(4)-RuvB(12)-RuvC(2) complex forms which resolves the HJ.

The protein localises to the cytoplasm. The RuvA-RuvB-RuvC complex processes Holliday junction (HJ) DNA during genetic recombination and DNA repair, while the RuvA-RuvB complex plays an important role in the rescue of blocked DNA replication forks via replication fork reversal (RFR). RuvA specifically binds to HJ cruciform DNA, conferring on it an open structure. The RuvB hexamer acts as an ATP-dependent pump, pulling dsDNA into and through the RuvAB complex. HJ branch migration allows RuvC to scan DNA until it finds its consensus sequence, where it cleaves and resolves the cruciform DNA. This chain is Holliday junction branch migration complex subunit RuvA, found in Rhodopseudomonas palustris (strain BisA53).